A 90-amino-acid polypeptide reads, in one-letter code: Acylphosphatase (90 aa).

The 88-residue stretch at 3–90 (QYHMIADGRV…KGYRTFSISY (88 aa)) folds into the Acylphosphatase-like domain. Catalysis depends on residues Arg18 and Asn36.

The protein belongs to the acylphosphatase family.

It carries out the reaction an acyl phosphate + H2O = a carboxylate + phosphate + H(+). This is Acylphosphatase (acyP) from Bacillus velezensis (strain DSM 23117 / BGSC 10A6 / LMG 26770 / FZB42) (Bacillus amyloliquefaciens subsp. plantarum).